The primary structure comprises 505 residues: L-carnitine/gamma-butyrobetaine antiporter (505 aa).

12 consecutive transmembrane segments (helical) span residues 10-30, 50-70, 92-112, 143-163, 195-215, 231-251, 263-283, 316-336, 347-367, 403-423, 446-466, and 475-495; these read IEPKVFFPPLIIVGILCWLTV, IWGWAFEWYMVVMLIGWFWLV, IFMMFASCTSAAVLFWGSIEI, GPLPWATYSFLSVAFAYFFFV, FYLVALIFAMGTSLGLATPLV, LDAIIITCWIILNAICVACGL, SYLSFLMLGWVFIVSGASFIM, WTVFYWAWWVIYAIQMSIFLA, LCFGMVLGLTASTWILWTVLG, LSTATMWGFFILCFIATVTLI, LLVRIGWSVLVGIIGIVLLAL, and AIIAGGCPLFFVNIMVTLSFI.

Belongs to the BCCT transporter (TC 2.A.15) family. CaiT subfamily. In terms of assembly, homotrimer.

It localises to the cell inner membrane. It carries out the reaction 4-(trimethylamino)butanoate(in) + (R)-carnitine(out) = 4-(trimethylamino)butanoate(out) + (R)-carnitine(in). It participates in amine and polyamine metabolism; carnitine metabolism. Functionally, catalyzes the exchange of L-carnitine for gamma-butyrobetaine. The chain is L-carnitine/gamma-butyrobetaine antiporter from Salmonella arizonae (strain ATCC BAA-731 / CDC346-86 / RSK2980).